The chain runs to 165 residues: Shikimate kinase (165 aa).

12–17 (GCGKST) provides a ligand contact to ATP. A Mg(2+)-binding site is contributed by S16. Substrate contacts are provided by D34, R57, and G79. ATP is bound at residue R116. R133 lines the substrate pocket.

This sequence belongs to the shikimate kinase family. Monomer. Mg(2+) is required as a cofactor.

The protein localises to the cytoplasm. It carries out the reaction shikimate + ATP = 3-phosphoshikimate + ADP + H(+). The protein operates within metabolic intermediate biosynthesis; chorismate biosynthesis; chorismate from D-erythrose 4-phosphate and phosphoenolpyruvate: step 5/7. In terms of biological role, catalyzes the specific phosphorylation of the 3-hydroxyl group of shikimic acid using ATP as a cosubstrate. The chain is Shikimate kinase from Clostridium botulinum (strain Alaska E43 / Type E3).